We begin with the raw amino-acid sequence, 148 residues long: Large ribosomal subunit protein bL9 (148 aa).

This sequence belongs to the bacterial ribosomal protein bL9 family.

Functionally, binds to the 23S rRNA. This is Large ribosomal subunit protein bL9 from Syntrophotalea carbinolica (strain DSM 2380 / NBRC 103641 / GraBd1) (Pelobacter carbinolicus).